The chain runs to 465 residues: Light-independent protochlorophyllide reductase subunit N (465 aa).

Residues cysteine 23, cysteine 48, and cysteine 108 each contribute to the [4Fe-4S] cluster site.

Belongs to the BchN/ChlN family. In terms of assembly, protochlorophyllide reductase is composed of three subunits; ChlL, ChlN and ChlB. Forms a heterotetramer of two ChlB and two ChlN subunits. [4Fe-4S] cluster is required as a cofactor.

It carries out the reaction chlorophyllide a + oxidized 2[4Fe-4S]-[ferredoxin] + 2 ADP + 2 phosphate = protochlorophyllide a + reduced 2[4Fe-4S]-[ferredoxin] + 2 ATP + 2 H2O. It participates in porphyrin-containing compound metabolism; chlorophyll biosynthesis (light-independent). Component of the dark-operative protochlorophyllide reductase (DPOR) that uses Mg-ATP and reduced ferredoxin to reduce ring D of protochlorophyllide (Pchlide) to form chlorophyllide a (Chlide). This reaction is light-independent. The NB-protein (ChlN-ChlB) is the catalytic component of the complex. This is Light-independent protochlorophyllide reductase subunit N from Trichodesmium erythraeum (strain IMS101).